Consider the following 161-residue polypeptide: Large ribosomal subunit protein uL30m (161 aa).

A mitochondrion-targeting transit peptide spans Met1 to His34.

It belongs to the universal ribosomal protein uL30 family. In terms of assembly, component of the mitochondrial large ribosomal subunit (mt-LSU). Mature mammalian 55S mitochondrial ribosomes consist of a small (28S) and a large (39S) subunit. The 28S small subunit contains a 12S ribosomal RNA (12S mt-rRNA) and 30 different proteins. The 39S large subunit contains a 16S rRNA (16S mt-rRNA), a copy of mitochondrial valine transfer RNA (mt-tRNA(Val)), which plays an integral structural role, and 52 different proteins.

It is found in the mitochondrion. The protein is Large ribosomal subunit protein uL30m (MRPL30) of Homo sapiens (Human).